Reading from the N-terminus, the 393-residue chain is Putative odorant receptor 69a, isoform B (393 aa).

Residues 1–39 are Cytoplasmic-facing; it reads MQLEDFMRYPDLVCQAAQLPRYTWNGRRSLEVKRNLAKR. A helical transmembrane segment spans residues 40-60; it reads IIFWLGAVNLVYHNIGCVMYG. Residues 61–69 lie on the Extracellular side of the membrane; sequence YFGDGRTKD. The helical transmembrane segment at 70–90 threads the bilayer; the sequence is PIAYLAELASVASMLGFTIVG. The Cytoplasmic portion of the chain corresponds to 91 to 138; the sequence is TLNLWKMLSLKTHFENLLNEFEELFQLIKHRAYRIHHYQEKYTRHIRN. Residues 139-159 traverse the membrane as a helical segment; sequence TFIFHTSAVVYYNSLPILLMI. At 160–208 the chain is on the extracellular side; that stretch reads REHFSNSQQLGYRIQSNTWYPWQVQGSIPGFFAAVACQIFSCQTNMCVN. The helical transmembrane segment at 209–229 threads the bilayer; that stretch reads MFIQFLINFFGIQLEIHFDGL. Residues 230 to 269 lie on the Cytoplasmic side of the membrane; the sequence is ARQLETIDARNPHAKDQLKYLIVYHTKLLNLADRVNRSFN. A helical transmembrane segment spans residues 270-290; that stretch reads FTFLISLSVSMISNCFLAFSM. Over 291 to 305 the chain is Extracellular; the sequence is TMFDFGTSLKHLLGL. Residues 306–326 form a helical membrane-spanning segment; it reads LLFITYNFSMCRSGTHLILTS. Residues 327–365 lie on the Cytoplasmic side of the membrane; the sequence is GKVLPAAFYNNWYEGDLVYRRMLLILMMRATKPYMWKTY. The chain crosses the membrane as a helical span at residues 366 to 386; the sequence is KLAPVSITTYMATLKFSYQMF. Residues 387 to 393 are Extracellular-facing; sequence TCVRSLK.

It belongs to the insect chemoreceptor superfamily. Heteromeric odorant receptor channel (TC 1.A.69) family. Or49a subfamily. In terms of assembly, interacts with Orco. Complexes exist early in the endomembrane system in olfactory sensory neurons (OSNs), coupling these complexes to the conserved ciliary trafficking pathway. Expressed in olfactory sensory neurons in the antenna.

The protein localises to the cell membrane. Functionally, odorant receptor which mediates acceptance or avoidance behavior, depending on its substrates. The odorant receptor repertoire encodes a large collection of odor stimuli that vary widely in identity, intensity, and duration. May form a complex with Orco to form odorant-sensing units, providing sensitive and prolonged odorant signaling and calcium permeability. In Drosophila melanogaster (Fruit fly), this protein is Putative odorant receptor 69a, isoform B (Or69a).